A 362-amino-acid chain; its full sequence is Histidinol-phosphate aminotransferase 2 (362 aa).

Position 222 is an N6-(pyridoxal phosphate)lysine (K222).

This sequence belongs to the class-II pyridoxal-phosphate-dependent aminotransferase family. Histidinol-phosphate aminotransferase subfamily. Homodimer. The cofactor is pyridoxal 5'-phosphate.

The enzyme catalyses L-histidinol phosphate + 2-oxoglutarate = 3-(imidazol-4-yl)-2-oxopropyl phosphate + L-glutamate. It participates in amino-acid biosynthesis; L-histidine biosynthesis; L-histidine from 5-phospho-alpha-D-ribose 1-diphosphate: step 7/9. This is Histidinol-phosphate aminotransferase 2 from Carboxydothermus hydrogenoformans (strain ATCC BAA-161 / DSM 6008 / Z-2901).